Consider the following 887-residue polypeptide: Valine--tRNA ligase (887 aa).

The short motif at 47–57 (PNVTGALHMGH) is the 'HIGH' region element. The 'KMSKS' region signature appears at 527–531 (KMSKS). Lys-530 is a binding site for ATP. A coiled-coil region spans residues 817 to 885 (LVNVEEEEKR…LLASLEKIRK (69 aa)).

The protein belongs to the class-I aminoacyl-tRNA synthetase family. ValS type 1 subfamily. Monomer.

Its subcellular location is the cytoplasm. It catalyses the reaction tRNA(Val) + L-valine + ATP = L-valyl-tRNA(Val) + AMP + diphosphate. Its function is as follows. Catalyzes the attachment of valine to tRNA(Val). As ValRS can inadvertently accommodate and process structurally similar amino acids such as threonine, to avoid such errors, it has a 'posttransfer' editing activity that hydrolyzes mischarged Thr-tRNA(Val) in a tRNA-dependent manner. The polypeptide is Valine--tRNA ligase (Geobacter sulfurreducens (strain ATCC 51573 / DSM 12127 / PCA)).